The sequence spans 722 residues: Probable dipeptidyl-peptidase 5 (722 aa).

Residues 1–18 (MGALRWLSLAAAASSALA) form the signal peptide. Residues Asn75, Asn78, Asn86, Asn94, Asn151, Asn253, and Asn448 are each glycosylated (N-linked (GlcNAc...) asparagine). Catalysis depends on Ser558, which acts as the Charge relay system. Asn605 carries an N-linked (GlcNAc...) asparagine glycan. Active-site charge relay system residues include Asp641 and His673.

The protein belongs to the peptidase S9C family.

The protein resides in the secreted. Its function is as follows. Extracellular dipeptidyl-peptidase which removes N-terminal dipeptides sequentially from polypeptides having unsubstituted N-termini. The protein is Probable dipeptidyl-peptidase 5 (dpp5) of Emericella nidulans (strain FGSC A4 / ATCC 38163 / CBS 112.46 / NRRL 194 / M139) (Aspergillus nidulans).